The chain runs to 191 residues: LOB domain-containing protein 19 (191 aa).

One can recognise an LOB domain in the interval 15–117 (GPCGACKFLR…AELAHVQARL (103 aa)).

This sequence belongs to the LOB domain-containing protein family. As to expression, expressed in shoots, roots and floral tissues, but not in stems or leaves.

The sequence is that of LOB domain-containing protein 19 (LBD19) from Arabidopsis thaliana (Mouse-ear cress).